The sequence spans 405 residues: Acetylornithine aminotransferase (405 aa).

Pyridoxal 5'-phosphate-binding positions include 107–108 and F140; that span reads GA. N(2)-acetyl-L-ornithine is bound at residue R143. 225–228 serves as a coordination point for pyridoxal 5'-phosphate; sequence DEVQ. Residue K254 is modified to N6-(pyridoxal phosphate)lysine. A N(2)-acetyl-L-ornithine-binding site is contributed by S282. Residue T283 participates in pyridoxal 5'-phosphate binding.

The protein belongs to the class-III pyridoxal-phosphate-dependent aminotransferase family. ArgD subfamily. Homodimer. Pyridoxal 5'-phosphate serves as cofactor.

It localises to the cytoplasm. It carries out the reaction N(2)-acetyl-L-ornithine + 2-oxoglutarate = N-acetyl-L-glutamate 5-semialdehyde + L-glutamate. It functions in the pathway amino-acid biosynthesis; L-arginine biosynthesis; N(2)-acetyl-L-ornithine from L-glutamate: step 4/4. The polypeptide is Acetylornithine aminotransferase (Shewanella oneidensis (strain ATCC 700550 / JCM 31522 / CIP 106686 / LMG 19005 / NCIMB 14063 / MR-1)).